The sequence spans 344 residues: MVTERQQDILNLIIDIFTKTHEPVGSKALQESINSSSATIRNDMAELEKQGLLEKAHTSSGRMPSVAGFQYYVKHSLDFDRLAENEVYEIVKAFDQEFFKLEDILQESANLLTDLSGCTVVALDVEPSRQRLTAFDIVVLGQHTALAVFTLDESRTVTSQFLIPRNFLQEDLLKLKSIIQERFLGHTVLDIHYKIRTEIPQIIQRYFTTTDNVIDLFEHIFKEMFNENIVMAGKVNLLNFANLAAYQFFDQPQKVALEIREGLREDQMQNVRVADGQESCLADLAVISSKFLIPYRGVGILAIIGPVNLDYQQLINQVNVVNRVLTMKLTDFYRYLSSNHYEVH.

This sequence belongs to the HrcA family.

Functionally, negative regulator of class I heat shock genes (grpE-dnaK-dnaJ and groELS operons). Prevents heat-shock induction of these operons. This Streptococcus pneumoniae (strain 70585) protein is Heat-inducible transcription repressor HrcA.